Consider the following 257-residue polypeptide: MFVDYSGLERYTDINASFGKLVNTYCCFQRCEAISEQLEILKSLVPKCHDIVALTDEDFASGRTAGLTQKLFAMAMTLHQITDCIDLLQKCNTIIPIEIANPASFESGAATAPLRQSYARLLDDWSHYMGPSTVKHTGCTNRPKWRFPWQQSRTIIIPMLFIGETAMSTRDLRSVLHDCEIRHASEMPLQLLWTSSPELVYATPHVDDYDIWSRYGSDYNMQIEDEDEASKGRQRKCVVQLEALLGALPTTDPLFQW.

It to yeast YKR015c.

This is an uncharacterized protein from Saccharomyces cerevisiae (strain ATCC 204508 / S288c) (Baker's yeast).